The following is a 737-amino-acid chain: Cilium assembly protein DZIP1L (737 aa).

Positions 1 to 293 (MGFKGKYPQM…LKQSNEQFIQ (293 aa)) are interaction with Rab8. A coiled-coil region spans residues 98–132 (VTDLKEAHTTAQEEIATLRKSLSESNNEVVQLHKR). The segment at 144 to 167 (YPCHLCTKNFISNEALNVHIGRKH) adopts a C2H2-type zinc-finger fold. Disordered stretches follow at residues 167-187 (HRVA…DRDK), 214-267 (ERNI…KEQL), 415-548 (SEFL…RKDA), 624-682 (KSPL…VSRD), and 698-737 (IRGA…DNLK). Composition is skewed to basic and acidic residues over residues 244–266 (EPKE…RKEQ) and 415–438 (SEFL…KGSE). Residues 457–469 (SAGSSDSNPTYTK) are compositionally biased toward polar residues. Positions 492-510 (SQEETENEEERSLTEEEGT) are enriched in acidic residues. Residues 665–677 (SSEQQTRSPSPQR) are compositionally biased toward polar residues. Residues 724–737 (EDGKSFNDSDDNLK) are compositionally biased toward basic and acidic residues.

This sequence belongs to the DZIP C2H2-type zinc-finger protein family. In terms of assembly, component of a ciliary transition zone (TZ)-localized complex composed of DZIP1, Fam92 and Cby. Interacts directly with Cby. Interacts with Cep290 (via N-terminus). Interacts (via N-terminus) with Rab8. As to expression, in neurons of the second and third antennal segments, expressed at the tip of the dendrites.

Its subcellular location is the cytoplasm. The protein resides in the cytoskeleton. The protein localises to the microtubule organizing center. It is found in the centrosome. It localises to the centriole. Its subcellular location is the cilium basal body. Its function is as follows. Component of the DZIP1-Fam92-Cby complex which promotes ciliogenesis in sensory neurons and spermatocytes by acting downstream of Cep290 to initiate early ciliary membrane formation and thus transition zone (TZ) assembly. During spermatogenesis, also regulates distal elongation of the basal-body and their docking (anchoring) to the plasma membrane and as a consequence, regulates the initiation and proper elongation of axonemal microtubules. Within the complex, required to recruit or stabilize Rab8, Fam92 and Cby at the distal basal body of cilia to promote early ciliary membrane formation and initiate TZ assembly. Also acts with Fam92 to restrict Cep290 localization to the proximal part of the TZ. May also be involved in recruitment or stabilization of Mks1 at the TZ. In Drosophila melanogaster (Fruit fly), this protein is Cilium assembly protein DZIP1L.